Here is a 305-residue protein sequence, read N- to C-terminus: Probable aspartoacylase (305 aa).

His13 and Glu16 together coordinate Zn(2+). Substrate is bound by residues Arg55 and 62–63; that span reads NR. His105 contributes to the Zn(2+) binding site. Residues Glu163 and Tyr273 each contribute to the substrate site.

It belongs to the AspA/AstE family. Aspartoacylase subfamily. The cofactor is Zn(2+).

The catalysed reaction is an N-acyl-L-aspartate + H2O = a carboxylate + L-aspartate. This chain is Probable aspartoacylase, found in Prochlorococcus marinus (strain NATL2A).